Consider the following 276-residue polypeptide: MDAEIFSLDSLSIYKDINIASAKPSLKERKNIKHYALDYLNIDEKNNAQLFKTLLEDAMRVSSKEILLIVGGSSFYLKSILEGLSDTPKISGEEVVKIEREIATLSNPYIFLKSIDPNMAFKIHSNDTYRIHKALEIFYATHTPPSEYFKANPKKPFAHAISLFALSVEKNALHNNIKQRTKNMLHSGLIEEIKALYTQYPKDSQPFKAIGVKESILFLEKRLTLKELEETITSNTIKLAKRQNTFNKTQFNNLYTGSVKEVRHAILKHSKSGIKG.

An interaction with substrate tRNA region spans residues 9 to 12 (DSLS).

This sequence belongs to the IPP transferase family. Monomer. Mg(2+) serves as cofactor.

The enzyme catalyses adenosine(37) in tRNA + dimethylallyl diphosphate = N(6)-dimethylallyladenosine(37) in tRNA + diphosphate. Its function is as follows. Catalyzes the transfer of a dimethylallyl group onto the adenine at position 37 in tRNAs that read codons beginning with uridine, leading to the formation of N6-(dimethylallyl)adenosine (i(6)A). The sequence is that of tRNA dimethylallyltransferase (miaA) from Helicobacter pylori (strain G27).